A 103-amino-acid polypeptide reads, in one-letter code: Stefin-2 (103 aa).

The Secondary area of contact motif lies at 52 to 56 (QVVQG).

This sequence belongs to the cystatin family.

The protein localises to the cytoplasm. In terms of biological role, this is an intracellular thiol proteinase inhibitor. This chain is Stefin-2 (Stfa2), found in Mus musculus (Mouse).